A 464-amino-acid chain; its full sequence is GTPase Der (464 aa).

EngA-type G domains are found at residues 3–166 (PTIA…AVES) and 177–350 (LKMA…QAAT). GTP is bound by residues 9–16 (GRPNVGKS), 56–60 (DTGGI), 118–121 (NKVD), 183–190 (GRPNVGKS), 230–234 (DTAGV), and 295–298 (NKWD). The region spanning 351–435 (EKYSTSFLTR…PVRIEYRSGD (85 aa)) is the KH-like domain.

The protein belongs to the TRAFAC class TrmE-Era-EngA-EngB-Septin-like GTPase superfamily. EngA (Der) GTPase family. As to quaternary structure, associates with the 50S ribosomal subunit.

In terms of biological role, GTPase that plays an essential role in the late steps of ribosome biogenesis. This is GTPase Der from Teredinibacter turnerae (strain ATCC 39867 / T7901).